The following is a 203-amino-acid chain: Glycerol-3-phosphate acyltransferase 1 (203 aa).

Transmembrane regions (helical) follow at residues 2–22 (LNFFLITIQFLSGAVMYSHII), 52–72 (GFPALMLDYFKGTFPIAFFVW), 82–102 (VIAFAALSGILGHAFSPFLKF), 117–137 (VLTKWEGPMVLGTVFTIFSIL), 150–168 (EDAFRVMIGFAALLIYTMW), and 170–190 (VFNGMPELAILYFGNFLIVFY).

The protein belongs to the PlsY family. As to quaternary structure, probably interacts with PlsX.

The protein localises to the cell inner membrane. The catalysed reaction is an acyl phosphate + sn-glycerol 3-phosphate = a 1-acyl-sn-glycero-3-phosphate + phosphate. It participates in lipid metabolism; phospholipid metabolism. Its function is as follows. Catalyzes the transfer of an acyl group from acyl-phosphate (acyl-PO(4)) to glycerol-3-phosphate (G3P) to form lysophosphatidic acid (LPA). This enzyme utilizes acyl-phosphate as fatty acyl donor, but not acyl-CoA or acyl-ACP. This is Glycerol-3-phosphate acyltransferase 1 from Thermotoga maritima (strain ATCC 43589 / DSM 3109 / JCM 10099 / NBRC 100826 / MSB8).